Consider the following 245-residue polypeptide: Eukaryotic translation initiation factor 3 subunit K (245 aa).

A PCI domain is found at 46-227 (YDCYANLALL…EAKGTVVREN (182 aa)).

Belongs to the eIF-3 subunit K family. In terms of assembly, component of the eukaryotic translation initiation factor 3 (eIF-3) complex.

Its subcellular location is the cytoplasm. Component of the eukaryotic translation initiation factor 3 (eIF-3) complex, which is involved in protein synthesis of a specialized repertoire of mRNAs and, together with other initiation factors, stimulates binding of mRNA and methionyl-tRNAi to the 40S ribosome. The eIF-3 complex specifically targets and initiates translation of a subset of mRNAs involved in cell proliferation. This Botryotinia fuckeliana (strain B05.10) (Noble rot fungus) protein is Eukaryotic translation initiation factor 3 subunit K.